A 247-amino-acid polypeptide reads, in one-letter code: MSQVNMRDMLKAGVHFGHQTRYWNPKMGKYIFGARNKIHIINLEKTLPMFNDALSFVEKLAAGKNKILFVGTKRSAGKIVREEAARCGSPFVDHRWLGGMLTNYKTIRASIKRLRELETQSQDGTFAKLTKKEALMRSRDLEKLDRSLGGIKDMGGLPDALFVIDVDHERIAITEANKLGIPVIGVVDTNSSPEGVDYIIPGNDDAIRAIQLYMGAMADAVIRGRSNAGGATEEFVEEAPAAESAEG.

Belongs to the universal ribosomal protein uS2 family.

This chain is Small ribosomal subunit protein uS2, found in Ectopseudomonas mendocina (strain ymp) (Pseudomonas mendocina).